The chain runs to 455 residues: Chromosomal replication initiator protein DnaA (455 aa).

The interval 1 to 74 (MFNFEKFWQH…IQSAYGYAGV (74 aa)) is domain I, interacts with DnaA modulators. Residues 74 to 117 (VELLPVFQISEDSDTPERIVTPEPQHNLQTTPTRAPQREFAKDL) are domain II. Positions 118–334 (KLNEKYTFDN…GALVKVQAYA (217 aa)) are domain III, AAA+ region. 4 residues coordinate ATP: Gly162, Gly164, Lys165, and Thr166. A domain IV, binds dsDNA region spans residues 335 to 455 (TIEKADIDIN…VFDLKQMLEH (121 aa)).

This sequence belongs to the DnaA family. In terms of assembly, oligomerizes as a right-handed, spiral filament on DNA at oriC.

Its subcellular location is the cytoplasm. Its function is as follows. Plays an essential role in the initiation and regulation of chromosomal replication. ATP-DnaA binds to the origin of replication (oriC) to initiate formation of the DNA replication initiation complex once per cell cycle. Binds the DnaA box (a 9 base pair repeat at the origin) and separates the double-stranded (ds)DNA. Forms a right-handed helical filament on oriC DNA; dsDNA binds to the exterior of the filament while single-stranded (ss)DNA is stabiized in the filament's interior. The ATP-DnaA-oriC complex binds and stabilizes one strand of the AT-rich DNA unwinding element (DUE), permitting loading of DNA polymerase. After initiation quickly degrades to an ADP-DnaA complex that is not apt for DNA replication. Binds acidic phospholipids. This chain is Chromosomal replication initiator protein DnaA, found in Lactobacillus acidophilus (strain ATCC 700396 / NCK56 / N2 / NCFM).